Reading from the N-terminus, the 698-residue chain is Capon-like protein (698 aa).

In terms of domain architecture, PID spans 25-194 (FFHGITFQAK…SELLDVEQIS (170 aa)). The tract at residues 191-240 (EQISEQQLSEDGERGGGDNETPKKEHLAITPDLNHTQPQRPNHLDIMPSH) is disordered. The span at 201 to 217 (DGERGGGDNETPKKEHL) shows a compositional bias: basic and acidic residues. Coiled coils occupy residues 265-327 (RSEI…LASL), 379-484 (NQQL…LNAN), and 554-583 (LNED…GNLA). The span at 396–423 (SQHLQNLQQQQQQQQQQQQQQTQAAPTA) shows a compositional bias: low complexity. Residues 396–460 (SQHLQNLQQQ…QQQQQQQQDA (65 aa)) form a disordered region. Positions 436–447 (YPSMSALQSISN) are enriched in polar residues. Residues 448–458 (QLQQQQQQQQQ) are compositionally biased toward low complexity. The disordered stretch occupies residues 588–698 (GGSTSTRDTS…RTTWARHTTK (111 aa)). The segment covering 590–640 (STSTRDTSRSSSTLDSPSSPRLRSSNNNISPGSSNGNQNHNNNSNSNSSSS) has biased composition (low complexity). Composition is skewed to polar residues over residues 662–672 (LSATPSFITRS) and 679–698 (NRSQ…HTTK).

In terms of tissue distribution, expressed at higher level in wing imaginal disk.

Functionally, putative adapter protein. This chain is Capon-like protein, found in Drosophila melanogaster (Fruit fly).